A 198-amino-acid polypeptide reads, in one-letter code: MRTDSGVWLTVVAHMIVGVDEAGRGPLAGPVVAAAVLLCEGGIAGLDDSKKLSARRRGALESAIRAQCRWGIGEASVEEIDRINILQATFLAMTRAVEALGFEPAEVLVDGNRLPRWRYQARAIVGGDALHPCISAASILAKQHRDRLMIAAAQDYPAFGWESNMGYGTAQHLAALRRHGPTPHHRTSFAPVAQLQLV.

The RNase H type-2 domain occupies 14–198 (HMIVGVDEAG…FAPVAQLQLV (185 aa)). A divalent metal cation contacts are provided by Asp-20, Glu-21, and Asp-110.

The protein belongs to the RNase HII family. Requires Mn(2+) as cofactor. Mg(2+) is required as a cofactor.

It localises to the cytoplasm. The enzyme catalyses Endonucleolytic cleavage to 5'-phosphomonoester.. Functionally, endonuclease that specifically degrades the RNA of RNA-DNA hybrids. The protein is Ribonuclease HII of Sphingopyxis alaskensis (strain DSM 13593 / LMG 18877 / RB2256) (Sphingomonas alaskensis).